The primary structure comprises 215 residues: Beta-crystallin A3 (215 aa).

An N-acetylmethionine modification is found at Met1. The interval 1 to 24 is disordered; that stretch reads METQTVQQELESLPTTKMAQTNPM. Positions 1 to 30 are N-terminal arm; that stretch reads METQTVQQELESLPTTKMAQTNPMPGSVGP. Glu2 is subject to N-acetylalanine. Beta/gamma crystallin 'Greek key' domains are found at residues 31–70 and 71–117; these read WKITIYDQENFQGKRMEFTSSCPNVSERNFDNVRSLKVEC and GAWV…RPIC. Residues Cys82 and Cys117 each carry the S-glutathionyl cysteine; alternate modification. Residues Cys82 and Cys117 each carry the S-methylcysteine; alternate modification. A connecting peptide region spans residues 118–123; it reads SANHKE. 2 Beta/gamma crystallin 'Greek key' domains span residues 124 to 165 and 166 to 214; these read SKIT…KIQC and GAWV…RRIQ.

Belongs to the beta/gamma-crystallin family. Homo/heterodimer, or complexes of higher-order. The structure of beta-crystallin oligomers seems to be stabilized through interactions between the N-terminal arms. Interacts with CRYBA1. Post-translationally, specific cleavages in the N-terminal arm occur during lens maturation and give rise to several truncated forms. In terms of processing, isoform A1 contains a N-acetylalanine at position 2.

In terms of biological role, crystallins are the dominant structural components of the vertebrate eye lens. The chain is Beta-crystallin A3 from Bos taurus (Bovine).